The primary structure comprises 301 residues: ATP synthase gamma chain (301 aa).

It belongs to the ATPase gamma chain family. F-type ATPases have 2 components, CF(1) - the catalytic core - and CF(0) - the membrane proton channel. CF(1) has five subunits: alpha(3), beta(3), gamma(1), delta(1), epsilon(1). CF(0) has three main subunits: a, b and c.

Its subcellular location is the cell inner membrane. Functionally, produces ATP from ADP in the presence of a proton gradient across the membrane. The gamma chain is believed to be important in regulating ATPase activity and the flow of protons through the CF(0) complex. The protein is ATP synthase gamma chain of Bordetella parapertussis (strain 12822 / ATCC BAA-587 / NCTC 13253).